Here is a 528-residue protein sequence, read N- to C-terminus: Calcium-dependent protein kinase 4 (528 aa).

The segment covering 1-16 (MGQEMSTQSDMQNENQ) has biased composition (polar residues). Positions 1-36 (MGQEMSTQSDMQNENQKGNKRNLKGSQGKNGLKERS) are disordered. Residue G2 is the site of N-myristoyl glycine attachment. The Protein kinase domain occupies 70-328 (YKGIKILGKG…ARDALEHEWI (259 aa)). ATP is bound by residues 76–84 (LGKGSFGEV) and K99. D193 (proton acceptor) is an active-site residue. The J domain autoinhibitory motif signature appears at 350–358 (NIKQFQSTQ). The segment at 350–386 (NIKQFQSTQKLAQAALLYMGSKLTTIDETKELTKIFK) is j domain. A J domain EF-hand interaction motif motif is present at residues 359-368 (KLAQAALLYM). 4 consecutive EF-hand domains span residues 376–411 (DETK…LLKL), 423–458 (AIEV…RKLL), 459–494 (LSTE…GDVS), and 498–528 (WKTV…LCNY). D389, N391, D393, Q395, E400, D436, D438, N440, Y442, E447, D472, D474, S476, K478, E483, D506, N508, D510, E512, and E517 together coordinate Ca(2+).

This sequence belongs to the protein kinase superfamily. Ser/Thr protein kinase family. CDPK subfamily. In terms of assembly, may interact with the pre-replication MCM complex prior male gametogenesis activation. Mg(2+) is required as a cofactor. Myristoylated; myristoylation may target it to different subcellular compartments. During male gametogenesis, myristoylation is required to initiate DNA replication but not for mitotic spindle assembly or axoneme activation. In terms of processing, not palmitoylated. Post-translationally, may be autophosphorylated on Thr-234 in vitro.

It is found in the cytoplasm. The protein resides in the membrane. The protein localises to the chromosome. It catalyses the reaction L-seryl-[protein] + ATP = O-phospho-L-seryl-[protein] + ADP + H(+). The catalysed reaction is L-threonyl-[protein] + ATP = O-phospho-L-threonyl-[protein] + ADP + H(+). With respect to regulation, activated by calcium. Upon calcium binding to the EF-hand domains, the C-terminus of the junction domain (J domain) undergoes a conformational change which results in the dissociation of the pseudo-substrate inhibitory motif from the catalytic domain. This, in turn, may facilitate the autophosphorylation of the activation loop at Thr-234, which leads to the kinase activation. Intracellular calcium increase is triggered by xanthurenic acid (XA), a small mosquito molecule that induces the differentiation of specialized transmission stages, the gametocytes, into male and female gametes. Activated by a decrease in temperature (20 degrees Celsius) and an increase in pH (7.6) occurring when the parasite is ingested by in the mosquito. Functionally, calcium-dependent protein kinase which acts as a sensor and effector of intracellular Ca(2+) levels probably in part downstream of cGMP-activated PKG kinase. Plays a central role in the host erythrocytes and hepatocytes infection cycles, sexual reproduction and mosquito transmission of the parasite. During the liver stage, involved in sporozoite motility and thus in sporozoite invasion of host hepatocytes, probably together with CDPK1 and CDPK5. Involved in merosome egress from host hepatocytes, probably together with CDPK5. During the asexual blood stage, involved in merozoite invasion of host erythrocytes and motility by stabilizing the inner membrane complex, a structure below the plasma membrane which acts as an anchor for the glidosome, an acto-myosin motor. Required for cell cycle progression in the male gametocyte. During male gametogenesis in the mosquito gut, required to initiate the first round of DNA replication, probably by facilitating the assembly of the pre-replicative MCM complex, to assemble the first mitotic spindle and, at the end of gametogenesis, to initiate axoneme motility, cytokinesis and subsequent exflagellation. For each of these steps, may phosphorylate SOC1, SOC2 and SOC3, respectively. Together with CDPK1, regulates ookinete gliding in the mosquito host midgut. In terms of biological role, during male gametogenesis in the mosquito gut, required to initiate the first round of DNA replication, probably by facilitating the assembly of the pre-replicative MCM complex, and to assemble the first mitotic spindle. At the end of male gametogenesis in the mosquito gut, required to initiate axoneme motility, cytokinesis and subsequent exflagellation. The chain is Calcium-dependent protein kinase 4 from Plasmodium berghei (strain Anka).